The chain runs to 327 residues: Mitochondrial substrate carrier family protein A (327 aa).

The segment at 1 to 36 is disordered; sequence MVINNQNNNNQNNNQNNNNKNDNLNNSTTTTTTTAT. Residues 1–48 are Mitochondrial intermembrane-facing; sequence MVINNQNNNNQNNNQNNNNKNDNLNNSTTTTTTTATTTKSSTLFHSND. Solcar repeat units lie at residues 43–132, 140–224, and 233–323; these read LFHS…FKRM, ISVI…IKEK, and PPLY…AITL. A helical membrane pass occupies residues 49 to 66; the sequence is FFSGLIAGIVSRTLTAPL. At 67–106 the chain is on the mitochondrial matrix side; the sequence is ERIKILNQVEVILKDGTKYNRIIPAFKVIIKEEGIAGLFR. The helical transmembrane segment at 107-127 threads the bilayer; sequence GNFVNIIKAGPQSAIRFYSYG. The Mitochondrial intermembrane portion of the chain corresponds to 128–145; the sequence is AFKRMASEPDGSISVINR. Residues 146–166 form a helical membrane-spanning segment; it reads MWAGASSGVVSVALTHPLDVI. Topologically, residues 167–192 are mitochondrial matrix; it reads KTHITVIAPTAATIKNVTKGIYRDLG. The chain crosses the membrane as a helical span at residues 193–213; sequence IIGFFRGLSAGILNIAPFAAL. The Mitochondrial intermembrane segment spans residues 214-238; sequence NFTFYETIKEKTQQYILKSPPLYAP. A helical membrane pass occupies residues 239-259; it reads SIYGAISGGLTMTILYPLDVV. The Mitochondrial matrix segment spans residues 260 to 303; it reads KRRIMLQHFDRNQLPIYKNFIDAIIKITKTEGISALYKGIRPAY. Residues 304 to 324 traverse the membrane as a helical segment; the sequence is LKVIPTVSINFLIYEGAITLF. The Mitochondrial intermembrane portion of the chain corresponds to 325–327; that stretch reads EKK.

Belongs to the mitochondrial carrier (TC 2.A.29) family.

The protein localises to the mitochondrion inner membrane. Functionally, calcium-dependent mitochondrial solute carrier. Mitochondrial solute carriers shuttle metabolites, nucleotides, and cofactors through the mitochondrial inner membrane. The polypeptide is Mitochondrial substrate carrier family protein A (mcfA) (Dictyostelium discoideum (Social amoeba)).